The chain runs to 609 residues: Putative pectinesterase/pectinesterase inhibitor 45 (609 aa).

Residues 25-45 (IILGVVSVLVVAAAIIGGAFA) form a helical membrane-spanning segment. Residues Asn51, Asn62, Asn100, Asn114, Asn183, Asn229, Asn296, Asn306, Asn346, and Asn362 are each glycosylated (N-linked (GlcNAc...) asparagine). The tract at residues 54-87 (QEQGKTTNNKSKDSPTKSESPSPKPPSSAAQTVK) is disordered. The tract at residues 89-241 (GQVDKIIQTL…QVLTSNSLAM (153 aa)) is pectinesterase inhibitor 45. The segment at 296–593 (NATVAKDGSG…FTVGPFLQGE (298 aa)) is pectinesterase 45. 2 residues coordinate substrate: Thr371 and Gln401. Asp424 functions as the Proton donor; for pectinesterase activity in the catalytic mechanism. A disulfide bond links Cys438 and Cys458. Asp445 (nucleophile; for pectinesterase activity) is an active-site residue. Asn491 is a glycosylation site (N-linked (GlcNAc...) asparagine). Residues Arg513 and Trp515 each contribute to the substrate site.

In the N-terminal section; belongs to the PMEI family. It in the C-terminal section; belongs to the pectinesterase family. As to expression, expressed in flower buds and pollen.

The protein resides in the membrane. It catalyses the reaction [(1-&gt;4)-alpha-D-galacturonosyl methyl ester](n) + n H2O = [(1-&gt;4)-alpha-D-galacturonosyl](n) + n methanol + n H(+). It participates in glycan metabolism; pectin degradation; 2-dehydro-3-deoxy-D-gluconate from pectin: step 1/5. Its function is as follows. Acts in the modification of cell walls via demethylesterification of cell wall pectin. The chain is Putative pectinesterase/pectinesterase inhibitor 45 (PME45) from Arabidopsis thaliana (Mouse-ear cress).